A 719-amino-acid chain; its full sequence is T-cell immunomodulatory protein homolog (719 aa).

An N-terminal signal peptide occupies residues 1–32 (MYNFLSCKKKSIILQVLLIICTYNILLNFVNI). Topologically, residues 33–677 (FVNNNEKNHK…LSVNPSKKFY (645 aa)) are extracellular. Residues N144, N277, N410, N540, and N659 are each glycosylated (N-linked (GlcNAc...) asparagine). The helical transmembrane segment at 678–697 (SILYITLICLSVIGVLIFIL) threads the bilayer. The Cytoplasmic segment spans residues 698 to 719 (DRKEKVEDSKEELGFKSHFVIG).

The protein belongs to the TIP family.

The protein localises to the membrane. May protect the parasite against attack by the host immune system by immunomodulation. This is T-cell immunomodulatory protein homolog from Plasmodium falciparum (isolate 3D7).